We begin with the raw amino-acid sequence, 277 residues long: Phosphate import ATP-binding protein PstB 2 (277 aa).

The ABC transporter domain maps to 31-272 (IEVPGLNLFY…PAKKQTEDYI (242 aa)). 63–70 (GPSGCGKS) provides a ligand contact to ATP.

It belongs to the ABC transporter superfamily. Phosphate importer (TC 3.A.1.7) family. In terms of assembly, the complex is composed of two ATP-binding proteins (PstB), two transmembrane proteins (PstC and PstA) and a solute-binding protein (PstS).

It is found in the cell inner membrane. It catalyses the reaction phosphate(out) + ATP + H2O = ADP + 2 phosphate(in) + H(+). Its function is as follows. Part of the ABC transporter complex PstSACB involved in phosphate import. Responsible for energy coupling to the transport system. This is Phosphate import ATP-binding protein PstB 2 from Pseudomonas savastanoi pv. phaseolicola (strain 1448A / Race 6) (Pseudomonas syringae pv. phaseolicola (strain 1448A / Race 6)).